The following is a 430-amino-acid chain: Probable sugar isomerase mlr5709 (430 aa).

The Mn(2+) site is built by histidine 257, aspartate 289, and aspartate 291.

The protein belongs to the rhamnose isomerase family. It depends on Mn(2+) as a cofactor.

The chain is Probable sugar isomerase mlr5709 from Mesorhizobium japonicum (strain LMG 29417 / CECT 9101 / MAFF 303099) (Mesorhizobium loti (strain MAFF 303099)).